The following is a 542-amino-acid chain: Putative cysteine ligase BshC (542 aa).

A coiled-coil region spans residues 458–487 (VAKNAAILQAQIEFLQHALERALLRKHETE).

This sequence belongs to the BshC family.

Functionally, involved in bacillithiol (BSH) biosynthesis. May catalyze the last step of the pathway, the addition of cysteine to glucosamine malate (GlcN-Mal) to generate BSH. The protein is Putative cysteine ligase BshC of Geobacillus kaustophilus (strain HTA426).